We begin with the raw amino-acid sequence, 305 residues long: tRNA pseudouridine synthase B (305 aa).

Residue Asp-48 is the Nucleophile of the active site.

Belongs to the pseudouridine synthase TruB family. Type 1 subfamily.

The catalysed reaction is uridine(55) in tRNA = pseudouridine(55) in tRNA. Its function is as follows. Responsible for synthesis of pseudouridine from uracil-55 in the psi GC loop of transfer RNAs. This Pseudomonas fluorescens (strain ATCC BAA-477 / NRRL B-23932 / Pf-5) protein is tRNA pseudouridine synthase B.